A 313-amino-acid polypeptide reads, in one-letter code: Serine/threonine-protein phosphatase PP2A-3 catalytic subunit (313 aa).

Mn(2+) contacts are provided by Asp-61, His-63, Asp-89, and Asn-121. Residue His-122 is the Proton donor of the active site. The Mn(2+) site is built by His-171 and His-245. Leu-313 carries the post-translational modification Leucine methyl ester.

The protein belongs to the PPP phosphatase family. PP-2A subfamily. In terms of assembly, PP2A consists of a common heterodimeric core enzyme, composed of a 36 kDa catalytic subunit (subunit C) and a 65 kDa constant regulatory subunit (subunit A), that associates with a variety of regulatory subunits such as subunits B (the R2/B/PR55/B55, R3/B''/PR72/PR130/PR59 and R5/B'/B56 families). Interacts with ACR4. Interacts with TAP46. Interacts with SIC/RON3. The cofactor is Mn(2+). Post-translationally, reversibly methyl esterified on Leu-313 by leucine carboxyl methyltransferase 1 (LCMT1) and pectin methylesterase 1 (PME1). Carboxyl methylation influences the affinity of the catalytic subunit for the different regulatory subunits, thereby modulating the PP2A holoenzyme's substrate specificity, enzyme activity and cellular localization. In terms of processing, phosphorylation of either threonine (by autophosphorylation-activated protein kinase) or tyrosine results in inactivation of the phosphatase. Auto-dephosphorylation has been suggested as a mechanism for reactivation.

It is found in the cytoplasm. The enzyme catalyses O-phospho-L-seryl-[protein] + H2O = L-seryl-[protein] + phosphate. It catalyses the reaction O-phospho-L-threonyl-[protein] + H2O = L-threonyl-[protein] + phosphate. Its function is as follows. Functions redundantly with PP2A4, and is involved in establishing auxin gradients, apical-basal axis of polarity and root and shoot apical meristem during embryogenesis. May dephosphorylate PIN1 and regulate its subcellular distribution for polar auxin transport. Involved in the regulation of formative cell division in roots by dephosphorylating ACR4 protein kinase. This chain is Serine/threonine-protein phosphatase PP2A-3 catalytic subunit, found in Arabidopsis thaliana (Mouse-ear cress).